The sequence spans 93 residues: Large ribosomal subunit protein bL27 (93 aa).

A propeptide spanning residues 1–9 (MIKINLQLF) is cleaved from the precursor.

This sequence belongs to the bacterial ribosomal protein bL27 family. Post-translationally, the N-terminus is cleaved by ribosomal processing cysteine protease Prp.

This chain is Large ribosomal subunit protein bL27, found in Ruminiclostridium cellulolyticum (strain ATCC 35319 / DSM 5812 / JCM 6584 / H10) (Clostridium cellulolyticum).